We begin with the raw amino-acid sequence, 279 residues long: MKRLFLSIFLLGSCLALAACADQEANAEQPMPKAEQKKPEKKAVQVQKKEDDTSAWIKTEKPAKLPILMYHSISSGNSLRVPKKEFEAHMKWLHDNGYQTLTPKEASLMLTQDKKPSEKCVLITFDDGYTDNYQDAYPVLKKYGMKATIFMIGKSIGHKHHLTEEQMKEMAQHGISIESHTIDHLELNGLTPQQQQSEMADSKKLFDNMFHQQTTIISYPVGRYNEETLKAAEKTGYQMGVTTEPGAASRDQGMYALHRVRVSPGMSGSAFGAYIESMK.

Positions 1-19 (MKRLFLSIFLLGSCLALAA) are cleaved as a signal peptide. A lipid anchor (N-palmitoyl cysteine) is attached at C20. Residue C20 is the site of S-diacylglycerol cysteine attachment. The tract at residues 29–51 (QPMPKAEQKKPEKKAVQVQKKED) is disordered. Basic and acidic residues predominate over residues 34 to 51 (AEQKKPEKKAVQVQKKED). The region spanning 119–279 (KCVLITFDDG…AFGAYIESMK (161 aa)) is the NodB homology domain.

Belongs to the polysaccharide deacetylase family.

The protein resides in the cell membrane. This Bacillus subtilis (strain 168) protein is Putative polysaccharide deacetylase YxkH (yxkH).